The following is a 317-amino-acid chain: ADIPOR-like receptor IZH1 (317 aa).

The Lumenal portion of the chain corresponds to 1 to 80; it reads MSEERGMKEQ…FNNESINIYT (80 aa). N-linked (GlcNAc...) asparagine glycosylation occurs at N73. Residues 81–101 traverse the membrane as a helical segment; that stretch reads HLIPGVAYLVLFLIFADLVLA. The Cytoplasmic portion of the chain corresponds to 102-113; sequence QLLPGLDAGEHR. A helical transmembrane segment spans residues 114-136; that stretch reads MLRFYLLGAFTCLACSSCFHCLK. The Lumenal portion of the chain corresponds to 137–148; sequence QHSEPHSRLWSK. A helical membrane pass occupies residues 149 to 169; sequence VDYLGILAQITCSTISLLYYG. Over 170–175 the chain is Cytoplasmic; the sequence is YHSYPS. A helical membrane pass occupies residues 176–196; the sequence is HFVFFSTLTVALCSACAVLVL. N197 is a glycosylation site (N-linked (GlcNAc...) asparagine). Residues 197-210 lie on the Lumenal side of the membrane; the sequence is NDSFNTVAFRPLRA. A helical transmembrane segment spans residues 211–231; sequence FLFMAFGLSGVIPVLAGSYQF. Residues 232–243 lie on the Cytoplasmic side of the membrane; the sequence is GFAEWAARIQLK. A helical transmembrane segment spans residues 244–264; sequence YVLYEAVFYITGALVYGFRIP. Residues 265–283 are Lumenal-facing; sequence ERFAPGKFDMVGHSHQIFH. Residues 284-304 traverse the membrane as a helical segment; that stretch reads LLVVLGTLCHFRAVTGSYIFI. Residues 305-317 lie on the Cytoplasmic side of the membrane; the sequence is CTGKHYSSLLMFI.

It belongs to the ADIPOR family.

The protein resides in the endoplasmic reticulum membrane. Its function is as follows. ADIPOR-like receptor involved in zinc metabolism either by altering membrane sterol content or by directly altering cellular zinc levels. The protein is ADIPOR-like receptor IZH1 (IZH1) of Eremothecium gossypii (strain ATCC 10895 / CBS 109.51 / FGSC 9923 / NRRL Y-1056) (Yeast).